The following is a 490-amino-acid chain: Actin-related protein 6 (490 aa).

This sequence belongs to the actin family. ARP6 subfamily.

Its subcellular location is the cytoplasm. The protein resides in the cytoskeleton. In Dictyostelium discoideum (Social amoeba), this protein is Actin-related protein 6.